The following is a 308-amino-acid chain: Ribosomal RNA small subunit methyltransferase H (308 aa).

S-adenosyl-L-methionine-binding positions include 32–34, D52, F78, D100, and Q107; that span reads GGH.

Belongs to the methyltransferase superfamily. RsmH family.

Its subcellular location is the cytoplasm. The catalysed reaction is cytidine(1402) in 16S rRNA + S-adenosyl-L-methionine = N(4)-methylcytidine(1402) in 16S rRNA + S-adenosyl-L-homocysteine + H(+). Functionally, specifically methylates the N4 position of cytidine in position 1402 (C1402) of 16S rRNA. The sequence is that of Ribosomal RNA small subunit methyltransferase H from Legionella pneumophila (strain Corby).